Consider the following 41-residue polypeptide: Antifungal peptide 2 (41 aa).

At Gln1 the chain carries Pyrrolidone carboxylic acid. Intrachain disulfides connect Cys3–Cys17, Cys7–Cys37, Cys11–Cys23, Cys16–Cys30, and Cys35–Cys39. The region spanning 4–41 (ASRCPRPCNAGLCCSIYGYCGSGAAYCGAGNCRCQCRG) is the Chitin-binding type-1 domain.

Monomer.

Its function is as follows. Has antifungal activity against P.infestans, A.lycopersici, V.dahliae, G.zeae, A.nicotianae, F.moniliforme, F.oxysporum and C.gossypii. This is Antifungal peptide 2 from Eucommia ulmoides (Hardy rubber tree).